A 313-amino-acid polypeptide reads, in one-letter code: 4-diphosphocytidyl-2-C-methyl-D-erythritol kinase (313 aa).

Lysine 27 is an active-site residue. 110-120 (PIGGGVGGGSS) provides a ligand contact to ATP. Residue aspartate 152 is part of the active site.

The protein belongs to the GHMP kinase family. IspE subfamily.

It catalyses the reaction 4-CDP-2-C-methyl-D-erythritol + ATP = 4-CDP-2-C-methyl-D-erythritol 2-phosphate + ADP + H(+). It participates in isoprenoid biosynthesis; isopentenyl diphosphate biosynthesis via DXP pathway; isopentenyl diphosphate from 1-deoxy-D-xylulose 5-phosphate: step 3/6. In terms of biological role, catalyzes the phosphorylation of the position 2 hydroxy group of 4-diphosphocytidyl-2C-methyl-D-erythritol. This is 4-diphosphocytidyl-2-C-methyl-D-erythritol kinase from Histophilus somni (strain 2336) (Haemophilus somnus).